Reading from the N-terminus, the 206-residue chain is Large ribosomal subunit protein mL62 (206 aa).

A mitochondrion-targeting transit peptide spans 1-29; it reads MATAWGLRWGLSRTGTLLLAPPARCARRA. An N5-methylglutamine modification is found at glutamine 90.

The protein belongs to the prokaryotic/mitochondrial release factor family. Mitochondrion-specific ribosomal protein mL62 subfamily. Component of the mitochondrial ribosome large subunit (39S) which comprises a 16S rRNA and about 50 distinct proteins. Methylation of glutamine in the GGQ triplet by HEMK1.

The protein resides in the mitochondrion. It carries out the reaction an N-acyl-L-alpha-aminoacyl-tRNA + H2O = an N-acyl-L-amino acid + a tRNA + H(+). Functionally, essential peptidyl-tRNA hydrolase component of the mitochondrial large ribosomal subunit. Acts as a codon-independent translation release factor that has lost all stop codon specificity and directs the termination of translation in mitochondrion, possibly in case of abortive elongation. May be involved in the hydrolysis of peptidyl-tRNAs that have been prematurely terminated and thus in the recycling of stalled mitochondrial ribosomes. This Mus musculus (Mouse) protein is Large ribosomal subunit protein mL62.